Consider the following 114-residue polypeptide: Putative antiporter subunit mnhC2 (114 aa).

3 consecutive transmembrane segments (helical) span residues 3 to 23 (LILLLVIGFLVFIGTYMILSI), 28 to 48 (IVIGISIYTHAGNLIIMSMGT), and 72 to 92 (AIVLTAIVIGFGMTAFLLVLV).

This sequence belongs to the CPA3 antiporters (TC 2.A.63) subunit C family. As to quaternary structure, may form a heterooligomeric complex that consists of seven subunits: mnhA2, mnhB2, mnhC2, mnhD2, mnhE2, mnhF2 and mnhG2.

The protein localises to the cell membrane. This chain is Putative antiporter subunit mnhC2 (mnhC2), found in Staphylococcus aureus (strain Mu3 / ATCC 700698).